Consider the following 141-residue polypeptide: Hemoglobin subunit alpha (141 aa).

The region spanning 1–141 (VLSDNDKTNV…VSTVLTSKYR (141 aa)) is the Globin domain. Ser-3 is modified (phosphoserine). Lys-7 is modified (N6-succinyllysine). Position 8 is a phosphothreonine (Thr-8). Lys-11 is modified (N6-succinyllysine). An N6-acetyllysine; alternate modification is found at Lys-16. Position 16 is an N6-succinyllysine; alternate (Lys-16). At Tyr-24 the chain carries Phosphotyrosine. Position 35 is a phosphoserine (Ser-35). Residue Lys-40 is modified to N6-succinyllysine. Residue His-58 coordinates O2. A heme b-binding site is contributed by His-87. Ser-102 carries the post-translational modification Phosphoserine. The residue at position 108 (Thr-108) is a Phosphothreonine. A Phosphoserine modification is found at Ser-124. 2 positions are modified to phosphothreonine: Thr-134 and Thr-137. Ser-138 carries the phosphoserine modification.

It belongs to the globin family. As to quaternary structure, heterotetramer of two alpha chains and two beta chains. As to expression, red blood cells.

Involved in oxygen transport from the lung to the various peripheral tissues. Its function is as follows. Hemopressin acts as an antagonist peptide of the cannabinoid receptor CNR1. Hemopressin-binding efficiently blocks cannabinoid receptor CNR1 and subsequent signaling. This is Hemoglobin subunit alpha (HBA) from Loxodonta africana (African elephant).